The chain runs to 576 residues: Arginine--tRNA ligase (576 aa).

The short motif at Pro-128–His-136 is the 'HIGH' region element.

This sequence belongs to the class-I aminoacyl-tRNA synthetase family. Monomer.

It is found in the cytoplasm. The enzyme catalyses tRNA(Arg) + L-arginine + ATP = L-arginyl-tRNA(Arg) + AMP + diphosphate. This Rickettsia conorii (strain ATCC VR-613 / Malish 7) protein is Arginine--tRNA ligase.